The sequence spans 154 residues: Nascent polypeptide-associated complex subunit beta (154 aa).

The 66-residue stretch at 34–99 (EQDDTKLIEA…PQEKDVTQLI (66 aa)) folds into the NAC-A/B domain. Positions 125-154 (KNPELNAGGAEGAEEDIPDLIEGQKFDDVE) are disordered.

This sequence belongs to the NAC-beta family. Part of the nascent polypeptide-associated complex (NAC), consisting of EGD2 and EGD1. NAC associates with ribosomes via EGD1.

It is found in the cytoplasm. Its subcellular location is the nucleus. In terms of biological role, component of the nascent polypeptide-associated complex (NAC), a dynamic component of the ribosomal exit tunnel, protecting the emerging polypeptides from interaction with other cytoplasmic proteins to ensure appropriate nascent protein targeting. The NAC complex also promotes mitochondrial protein import by enhancing productive ribosome interactions with the outer mitochondrial membrane and blocks the inappropriate interaction of ribosomes translating non-secretory nascent polypeptides with translocation sites in the membrane of the endoplasmic reticulum. EGD1 may act as a transcription factor that exert a negative effect on the expression of several genes that are transcribed by RNA polymerase II. This Debaryomyces hansenii (strain ATCC 36239 / CBS 767 / BCRC 21394 / JCM 1990 / NBRC 0083 / IGC 2968) (Yeast) protein is Nascent polypeptide-associated complex subunit beta (EGD1).